The chain runs to 289 residues: ATP phosphoribosyltransferase (289 aa).

Belongs to the ATP phosphoribosyltransferase family. Long subfamily. Mg(2+) serves as cofactor.

Its subcellular location is the cytoplasm. The catalysed reaction is 1-(5-phospho-beta-D-ribosyl)-ATP + diphosphate = 5-phospho-alpha-D-ribose 1-diphosphate + ATP. Its pathway is amino-acid biosynthesis; L-histidine biosynthesis; L-histidine from 5-phospho-alpha-D-ribose 1-diphosphate: step 1/9. Feedback inhibited by histidine. Its function is as follows. Catalyzes the condensation of ATP and 5-phosphoribose 1-diphosphate to form N'-(5'-phosphoribosyl)-ATP (PR-ATP). Has a crucial role in the pathway because the rate of histidine biosynthesis seems to be controlled primarily by regulation of HisG enzymatic activity. The sequence is that of ATP phosphoribosyltransferase from Desulforudis audaxviator (strain MP104C).